The sequence spans 421 residues: 5-hydroxytryptamine receptor 2 (421 aa).

The Extracellular segment spans residues 1-21 (MLCGRLRHTMNSTTCFFSHRT). Asn-11 is a glycosylation site (N-linked (GlcNAc...) asparagine). Residues 22-42 (VLIGIVGSLIIAVSVVGNVLV) form a helical membrane-spanning segment. Residues 43-59 (CLAIFTEPILSHSKSKF) lie on the Cytoplasmic side of the membrane. Residues 60-79 (FIVSLAVADLLLALLVMTFA) form a helical membrane-spanning segment. Topologically, residues 80–95 (LVNSLYGYWLFGETFC) are extracellular. Cys-95 and Cys-210 are disulfide-bonded. The chain crosses the membrane as a helical span at residues 96-118 (FIWMSADVMCETASIFSICVISY). Residues 119 to 138 (NRLKQVQKPLQYEEFMTTTR) are Cytoplasmic-facing. The helical transmembrane segment at 139–160 (ALLIIASLWICSFVVSFVPFFL) threads the bilayer. Residues 161–213 (EWHELSMEEIKTIFKDLISDKVKTSDAHTFSFALEQTLGDNRTSNPKPECLFD) are Extracellular-facing. Residues 214-234 (VHFIYSVIYSLFCFYIPCTLM) traverse the membrane as a helical segment. Residues 235 to 274 (LRNYLRLFLIAKKHHVRIKNLHRLHRNQGTQGSKAARTLT) lie on the Cytoplasmic side of the membrane. Residues 275-295 (IITGTFLACWLPFFIINPIEA) traverse the membrane as a helical segment. The Extracellular segment spans residues 296–304 (VDEHLIPLE). The chain crosses the membrane as a helical span at residues 305-325 (CFMVTIWLGYFNSCVNPIIYG). Residues 326-421 (TSNSKFRAAF…MLSESDTVFS (96 aa)) lie on the Cytoplasmic side of the membrane.

Belongs to the G-protein coupled receptor 1 family. As to expression, central nervous system.

It localises to the cell membrane. Its function is as follows. This is one of the several different receptors for 5-hydroxytryptamine (serotonin). 5-HT plays important roles in various behavioral and physiological processes in aplysia. These include feeding, locomotion, circadian rhythm, learning and memory, synaptic plasticity, and synaptic growth. This receptor is mediated by G proteins that stimulate phospholipase C. This chain is 5-hydroxytryptamine receptor 2 (5HTB2), found in Aplysia californica (California sea hare).